The following is a 248-amino-acid chain: Carbohydrate deacetylase (248 aa).

His59 and His121 together coordinate Mg(2+).

It belongs to the YdjC deacetylase family. It depends on Mg(2+) as a cofactor.

Functionally, probably catalyzes the deacetylation of acetylated carbohydrates an important step in the degradation of oligosaccharides. The chain is Carbohydrate deacetylase from Brevibacillus brevis (strain 47 / JCM 6285 / NBRC 100599).